The sequence spans 837 residues: MKDKFSFQKNYDFNLVSDGLYEIWNNAGFFKPKDKNNSFTAILPPPNLTGTLHIGHAFEVSITDQIMRFKKMQGFSINWIPGFDHAGIATQTKYEKIALKENQKYFDADDDKKSEMIMNWALNQSEIIKNQLKSLGVCLNWSETKFTLSEQANKIVNNCFKNLYENGFIYQAYTLVNWDTKLNTAISNIEVINKPVNQHLHYVVYKLANDSKQELIVATTRPETIFADVCLLVNPKDKRYTNFWNKLVVNPLTGKQIPVVTDSYVDIKFGTGILKCTPAHDFNDYEINTKYKFDFLSCIDSNGILNQNASKFQGLSVLQARNKIVKWLEKNKLLVKSIPLTSNVGFSERSGTVVEPMLSKQWFVDLPKLKDHLYLKKYPDFIPKRFNKQVSNWLNKLKPWCISRQLIWGHKIPVWFENNTGEIVVGEKPSKNLQNYTRSKDVLDTWFSSSLWPLICLNWEQDDSFHETELLVTGYDILFFWVLRMLFNSFFETKKLPFKTVLIHGLVRDEQNRKMSKSLNNGIDPVDLIRNYGADAVRLFLCSNHTPGDDLIFSEQKIKSAWNFLNKLWNVTKFVIQLENDQEISYDLDKLSLSETWILAKLDKVIQKITKLLDKFQLALANQILVKFVWDDFCNTFIEAIKKEPNQLKPQLFYTAKSVLSNIAILLSITVPFLSERIYQQFNNKSVMQATWPLATKIKIPKLFDLVLAAINDLRNYRKQYMLNSQQKLVVILSGKNAVDVKQYFNFSWIELKIETNKKVSFKYQIVDDTTQRLKSLQKQQAFFESEVKRSQAIVKNKSFLEKAPKEKVKSEFLKLEEYQKKLTETNQLIAKLTKAH.

Residues 46–56 (PNLTGTLHIGH) carry the 'HIGH' region motif. Residues 514 to 518 (KMSKS) carry the 'KMSKS' region motif. An ATP-binding site is contributed by Lys-517. Residues 767-837 (VDDTTQRLKS…QLIAKLTKAH (71 aa)) adopt a coiled-coil conformation.

The protein belongs to the class-I aminoacyl-tRNA synthetase family. ValS type 1 subfamily. In terms of assembly, monomer.

The protein resides in the cytoplasm. It catalyses the reaction tRNA(Val) + L-valine + ATP = L-valyl-tRNA(Val) + AMP + diphosphate. Its function is as follows. Catalyzes the attachment of valine to tRNA(Val). As ValRS can inadvertently accommodate and process structurally similar amino acids such as threonine, to avoid such errors, it has a 'posttransfer' editing activity that hydrolyzes mischarged Thr-tRNA(Val) in a tRNA-dependent manner. The chain is Valine--tRNA ligase from Mycoplasma genitalium (strain ATCC 33530 / DSM 19775 / NCTC 10195 / G37) (Mycoplasmoides genitalium).